A 174-amino-acid chain; its full sequence is Serine protease 2 (174 aa).

Cys15 and Cys36 are disulfide-bonded. Catalysis depends on charge relay system residues His35, Asp65, and Ser147. Cys141 and Cys168 form a disulfide bridge.

This sequence belongs to the peptidase S1 family.

The protein resides in the secreted. Its function is as follows. Broad substrate specificity. This chain is Serine protease 2, found in Streptomyces fradiae (Streptomyces roseoflavus).